Reading from the N-terminus, the 299-residue chain is ATP phosphoribosyltransferase (299 aa).

Belongs to the ATP phosphoribosyltransferase family. Long subfamily. Equilibrium between an active dimeric form, an inactive hexameric form and higher aggregates. Interconversion between the various forms is largely reversible and is influenced by the natural substrates and inhibitors of the enzyme. Mg(2+) is required as a cofactor.

The protein resides in the cytoplasm. It carries out the reaction 1-(5-phospho-beta-D-ribosyl)-ATP + diphosphate = 5-phospho-alpha-D-ribose 1-diphosphate + ATP. The protein operates within amino-acid biosynthesis; L-histidine biosynthesis; L-histidine from 5-phospho-alpha-D-ribose 1-diphosphate: step 1/9. Feedback inhibited by histidine. In terms of biological role, catalyzes the condensation of ATP and 5-phosphoribose 1-diphosphate to form N'-(5'-phosphoribosyl)-ATP (PR-ATP). Has a crucial role in the pathway because the rate of histidine biosynthesis seems to be controlled primarily by regulation of HisG enzymatic activity. This Serratia proteamaculans (strain 568) protein is ATP phosphoribosyltransferase.